Consider the following 677-residue polypeptide: Collagen alpha-2(IX) chain (677 aa).

Positions 1–21 (MAHRSPALCLLLLHAACLCLA) are cleaved as a signal peptide. The tract at residues 25 to 161 (GPPGEPGPRG…PGKPGPPGHI (137 aa)) is triple-helical region 4 (COL4). Residues 28–41 (GEPGPRGPPGPPGV) are compositionally biased toward pro residues. Residues 28–516 (GEPGPRGPPG…MPGQRGVAGR (489 aa)) form a disordered region. Residues 53–66 (SPGAPGSPGAKGEP) are compositionally biased toward low complexity. A compositionally biased stretch (pro residues) spans 68 to 77 (APGPDGPPGK). A compositionally biased stretch (gly residues) spans 91 to 100 (GPWGGQGLKG). 2 stretches are compositionally biased toward pro residues: residues 104-121 (LPGP…PPGL) and 137-158 (KGDP…PGPP). Proline 158 is modified (4-hydroxyproline). The nonhelical region 4 (NC4) stretch occupies residues 162 to 178 (QGVEGSADFLCPTNCPP). An O-linked (Xyl...) (glycosaminoglycan) serine glycan is attached at serine 167. Proline 178 carries the 4-hydroxyproline modification. Residues 179-517 (GPKGPQGLQG…PGQRGVAGRD (339 aa)) are triple-helical region 3 (COL3). Lysine 181 bears the 5-hydroxylysine mark. O-linked (Gal...) hydroxylysine glycosylation occurs at lysine 181. Lysine 190 carries the post-translational modification Allysine. Low complexity-rich tracts occupy residues 363–382 (TPGL…AGVP), 430–442 (PGKT…TGDP), and 496–505 (RGLLGERGVP). Residues 518 to 547 (AGDQHIIDVVLKMMQEQLAEVAVSAKRAAL) form a nonhelical region 3 (NC3) region. The triple-helical region 2 (COL2) stretch occupies residues 548–630 (GGVGAMGPPG…PGLPGIPGHA (83 aa)). Residues 550–657 (VGAMGPPGPP…GRPGSPGPAG (108 aa)) form a disordered region. A compositionally biased stretch (pro residues) spans 555–565 (PPGPPGPPGPP). The span at 597 to 609 (KRGEKGERGDTGR) shows a compositional bias: basic and acidic residues. A nonhelical region 2 (NC2) region spans residues 631–632 (LA). The segment at 633–662 (GKDGERGPPGVPGDAGRPGSPGPAGLPGFC) is triple-helical region 1 (COL1). Residues 663 to 677 (EPAACLGALPTPRHG) are nonhelical region 1 (NC1).

It belongs to the fibril-associated collagens with interrupted helices (FACIT) family. As to quaternary structure, heterotrimer of an alpha 1(IX), an alpha 2(IX) and an alpha 3(IX) chain. The chains are linked to each other by interchain disulfide bonds. Trimers are also cross-linked via hydroxylysines. Post-translationally, covalently linked to the telopeptides of type II collagen by lysine-derived cross-links. In terms of processing, prolines at the third position of the tripeptide repeating unit (G-X-Y) are hydroxylated in some or all of the chains.

It localises to the secreted. Its subcellular location is the extracellular space. The protein resides in the extracellular matrix. Its function is as follows. Structural component of hyaline cartilage and vitreous of the eye. The polypeptide is Collagen alpha-2(IX) chain (COL9A2) (Gallus gallus (Chicken)).